A 180-amino-acid chain; its full sequence is Small ribosomal subunit protein bS21c (180 aa).

Residues 1 to 79 constitute a chloroplast transit peptide; that stretch reads MASTSSLLNF…PSLAFSNTLY (79 aa). Residues 14–45 are compositionally biased toward low complexity; sequence LFPSNTSLPPSSNPKFPNPNSLSSQQNSISIS. Disordered stretches follow at residues 14-49 and 124-180; these read LFPS…SKKH and NKQE…GAPF. Basic residues predominate over residues 130–147; the sequence is KRKHREAAKRNSRRRRGP. Over residues 154–166 the composition is skewed to basic and acidic residues; sequence GKEEATKVDKKED.

As to quaternary structure, component of the chloroplast small ribosomal subunit (SSU). Mature 70S chloroplast ribosomes of higher plants consist of a small (30S) and a large (50S) subunit. The 30S small subunit contains 1 molecule of ribosomal RNA (16S rRNA) and 24 different proteins. The 50S large subunit contains 3 rRNA molecules (23S, 5S and 4.5S rRNA) and 33 different proteins. bS21c binds directly to 16S ribosomal RNA.

It is found in the plastid. It localises to the chloroplast. Functionally, component of the chloroplast ribosome (chloro-ribosome), a dedicated translation machinery responsible for the synthesis of chloroplast genome-encoded proteins, including proteins of the transcription and translation machinery and components of the photosynthetic apparatus. The chain is Small ribosomal subunit protein bS21c (rps21) from Spinacia oleracea (Spinach).